Here is a 917-residue protein sequence, read N- to C-terminus: Calcium-activated chloride channel regulator 1 (917 aa).

An N-terminal signal peptide occupies residues 1 to 21; it reads MGSFRSSLFILVLHLLEGAQS. Positions 46-199 are metalloprotease domain; the sequence is DERLIQNIKD…AIRGTNVLPQ (154 aa). A Zn(2+)-binding site is contributed by H156. The active site involves E157. Positions 160 and 167 each coordinate Zn(2+). The 170-residue stretch at 306–475 folds into the VWFA domain; it reads IVCLVLDKSG…NGLIDAFGAL (170 aa). N-linked (GlcNAc...) asparagine glycosylation is found at N503, N772, N806, N812, N838, and N893.

The protein belongs to the CLCR family. Post-translationally, glycosylated. In terms of processing, the translation product is autoproteolytically cleaved by the metalloprotease domain in the endoplasmic reticulum into a N-terminal and a C-terminal products that remain physically associated with each other. The cleavage is necessary for calcium-activated chloride channel (CaCC) activation activity. In terms of tissue distribution, expressed in ileum, trachea, and the major salivary glands. In ileum, expressed to the crypt and villus epithelia, whereas in trachea expressed in both surface epithelium and submucosal glands.

It localises to the secreted. The protein localises to the extracellular space. Functionally, may be involved in mediating calcium-activated chloride conductance. May play critical roles in goblet cell metaplasia, mucus hypersecretion, cystic fibrosis and AHR. May be involved in the regulation of mucus production and/or secretion by goblet cells. Involved in the regulation of tissue inflammation in the innate immune response. May play a role as a tumor suppressor. Induces MUC5AC. Induces a cAMP-dependent chloride conductance possibly through effects on CFTR in colon carcinoma cells. This is Calcium-activated chloride channel regulator 1 (CLCA1) from Sus scrofa (Pig).